A 438-amino-acid polypeptide reads, in one-letter code: Adenylosuccinate synthetase (438 aa).

GTP-binding positions include 13 to 19 (GDEGKGK) and 41 to 43 (GHT). Asp-14 (proton acceptor) is an active-site residue. Residues Asp-14 and Gly-41 each coordinate Mg(2+). IMP contacts are provided by residues 14–17 (DEGK), 39–42 (NAGH), Thr-130, Arg-144, Gln-225, Thr-240, and Arg-312. The active-site Proton donor is the His-42. Residue 308–314 (ATTGRQR) participates in substrate binding. Residues Arg-314, 340 to 342 (KLD), and 422 to 424 (STG) contribute to the GTP site.

It belongs to the adenylosuccinate synthetase family. As to quaternary structure, homodimer. Requires Mg(2+) as cofactor.

Its subcellular location is the cytoplasm. It carries out the reaction IMP + L-aspartate + GTP = N(6)-(1,2-dicarboxyethyl)-AMP + GDP + phosphate + 2 H(+). It participates in purine metabolism; AMP biosynthesis via de novo pathway; AMP from IMP: step 1/2. Plays an important role in the de novo pathway of purine nucleotide biosynthesis. Catalyzes the first committed step in the biosynthesis of AMP from IMP. This Ruthia magnifica subsp. Calyptogena magnifica protein is Adenylosuccinate synthetase.